The sequence spans 687 residues: uncharacterized protein (687 aa).

Positions 277–295 (SVCSSQSFSSGQSDISMSS) are enriched in low complexity. Disordered regions lie at residues 277-337 (SVCS…QDCD), 342-361 (DTES…SEMP), and 531-564 (HVEQ…PSLI). A compositionally biased stretch (polar residues) spans 300–313 (NGSSVGNGSLSPMT).

This is an uncharacterized protein from Caenorhabditis elegans.